Here is a 297-residue protein sequence, read N- to C-terminus: Coatomer subunit epsilon-2 (297 aa).

The protein belongs to the COPE family. Oligomeric complex that consists of at least the alpha, beta, beta', gamma, delta, epsilon and zeta subunits.

Its subcellular location is the cytoplasm. It localises to the golgi apparatus membrane. The protein resides in the cytoplasmic vesicle. It is found in the COPI-coated vesicle membrane. Functionally, the coatomer is a cytosolic protein complex that binds to dilysine motifs and reversibly associates with Golgi non-clathrin-coated vesicles, which further mediate biosynthetic protein transport from the ER, via the Golgi up to the trans Golgi network. The coatomer complex is required for budding from Golgi membranes, and is essential for the retrograde Golgi-to-ER transport of dilysine-tagged proteins. The protein is Coatomer subunit epsilon-2 of Oryza sativa subsp. indica (Rice).